Here is a 390-residue protein sequence, read N- to C-terminus: Transforming protein cbl (390 aa).

Residues 1 to 52 (ASAGGGCRRGPSFSPGSIPSLAAERAPDPPLAMAGNVKKSSGAGGGGSGGSG) are disordered. Positions 42–52 (GAGGGGSGGSG) are enriched in gly residues. The interval 77–205 (PPCTVDKKMV…KGIFPSGLFQ (129 aa)) is 4H. One can recognise a Cbl-PTB domain in the interval 77–381 (PPCTVDKKMV…GRNQNPDLTG (305 aa)). The tract at residues 206–278 (GDTFRITKAD…FEFDIFTRLF (73 aa)) is EF-hand-like. The Ca(2+) site is built by Asp-259, Thr-261, Asn-263, Tyr-265, and Glu-270. The segment at 279-381 (QPWSSLLRNW…GRNQNPDLTG (103 aa)) is SH2-like. Arg-324 serves as a coordination point for 4-O-phospho-L-tyrosine.

Functionally, induces early B-lineage lymphomas. This Mus musculus (Mouse) protein is Transforming protein cbl (V-CBL).